A 434-amino-acid chain; its full sequence is Glutamyl-tRNA reductase (434 aa).

Residues Thr-52–Arg-55, Ser-115, Glu-120–Gln-122, and Gln-126 each bind substrate. Cys-53 acts as the Nucleophile in catalysis. Gly-195–Ile-200 provides a ligand contact to NADP(+).

It belongs to the glutamyl-tRNA reductase family. As to quaternary structure, homodimer.

The enzyme catalyses (S)-4-amino-5-oxopentanoate + tRNA(Glu) + NADP(+) = L-glutamyl-tRNA(Glu) + NADPH + H(+). It functions in the pathway porphyrin-containing compound metabolism; protoporphyrin-IX biosynthesis; 5-aminolevulinate from L-glutamyl-tRNA(Glu): step 1/2. Catalyzes the NADPH-dependent reduction of glutamyl-tRNA(Glu) to glutamate 1-semialdehyde (GSA). The sequence is that of Glutamyl-tRNA reductase from Cupriavidus metallidurans (strain ATCC 43123 / DSM 2839 / NBRC 102507 / CH34) (Ralstonia metallidurans).